Consider the following 457-residue polypeptide: Argininosuccinate lyase (457 aa).

The protein belongs to the lyase 1 family. Argininosuccinate lyase subfamily.

It is found in the cytoplasm. The enzyme catalyses 2-(N(omega)-L-arginino)succinate = fumarate + L-arginine. Its pathway is amino-acid biosynthesis; L-arginine biosynthesis; L-arginine from L-ornithine and carbamoyl phosphate: step 3/3. This is Argininosuccinate lyase from Escherichia coli O1:K1 / APEC.